Here is a 155-residue protein sequence, read N- to C-terminus: 6,7-dimethyl-8-ribityllumazine synthase (155 aa).

5-amino-6-(D-ribitylamino)uracil is bound by residues Phe-22, 56–58, and 80–82; these read AFE and AVI. 85–86 contributes to the (2S)-2-hydroxy-3-oxobutyl phosphate binding site; that stretch reads NT. The active-site Proton donor is His-88. Phe-113 is a 5-amino-6-(D-ribitylamino)uracil binding site. (2S)-2-hydroxy-3-oxobutyl phosphate is bound at residue Arg-127.

Belongs to the DMRL synthase family.

The catalysed reaction is (2S)-2-hydroxy-3-oxobutyl phosphate + 5-amino-6-(D-ribitylamino)uracil = 6,7-dimethyl-8-(1-D-ribityl)lumazine + phosphate + 2 H2O + H(+). It participates in cofactor biosynthesis; riboflavin biosynthesis; riboflavin from 2-hydroxy-3-oxobutyl phosphate and 5-amino-6-(D-ribitylamino)uracil: step 1/2. In terms of biological role, catalyzes the formation of 6,7-dimethyl-8-ribityllumazine by condensation of 5-amino-6-(D-ribitylamino)uracil with 3,4-dihydroxy-2-butanone 4-phosphate. This is the penultimate step in the biosynthesis of riboflavin. In Streptococcus pneumoniae serotype 2 (strain D39 / NCTC 7466), this protein is 6,7-dimethyl-8-ribityllumazine synthase.